Reading from the N-terminus, the 321-residue chain is tRNA(Ile)-lysidine synthase (321 aa).

30–35 serves as a coordination point for ATP; sequence SGGSDS.

This sequence belongs to the tRNA(Ile)-lysidine synthase family.

It localises to the cytoplasm. It catalyses the reaction cytidine(34) in tRNA(Ile2) + L-lysine + ATP = lysidine(34) in tRNA(Ile2) + AMP + diphosphate + H(+). In terms of biological role, ligates lysine onto the cytidine present at position 34 of the AUA codon-specific tRNA(Ile) that contains the anticodon CAU, in an ATP-dependent manner. Cytidine is converted to lysidine, thus changing the amino acid specificity of the tRNA from methionine to isoleucine. The sequence is that of tRNA(Ile)-lysidine synthase from Chlamydia trachomatis serovar A (strain ATCC VR-571B / DSM 19440 / HAR-13).